The following is a 165-amino-acid chain: Transcription elongation factor GreA (165 aa).

Residues alanine 55–lysine 78 are a coiled coil.

This sequence belongs to the GreA/GreB family.

In terms of biological role, necessary for efficient RNA polymerase transcription elongation past template-encoded arresting sites. The arresting sites in DNA have the property of trapping a certain fraction of elongating RNA polymerases that pass through, resulting in locked ternary complexes. Cleavage of the nascent transcript by cleavage factors such as GreA or GreB allows the resumption of elongation from the new 3'terminus. GreA releases sequences of 2 to 3 nucleotides. The polypeptide is Transcription elongation factor GreA (Streptomyces avermitilis (strain ATCC 31267 / DSM 46492 / JCM 5070 / NBRC 14893 / NCIMB 12804 / NRRL 8165 / MA-4680)).